We begin with the raw amino-acid sequence, 875 residues long: Outer membrane usher protein FocD (875 aa).

An N-terminal signal peptide occupies residues 1-38 (MFFGDGGQLLSDKSLTGSAGGGNNRMKFNILPLAFFIG). A disulfide bond links C852 and C874.

The protein belongs to the fimbrial export usher family.

Its subcellular location is the cell outer membrane. Functionally, involved in the export and assembly of the F1C fimbriae subunits across the outer membrane. This Escherichia coli protein is Outer membrane usher protein FocD (focD).